A 94-amino-acid chain; its full sequence is Integration host factor subunit beta (94 aa).

This sequence belongs to the bacterial histone-like protein family. Heterodimer of an alpha and a beta chain.

Its function is as follows. This protein is one of the two subunits of integration host factor, a specific DNA-binding protein that functions in genetic recombination as well as in transcriptional and translational control. In Aeromonas hydrophila subsp. hydrophila (strain ATCC 7966 / DSM 30187 / BCRC 13018 / CCUG 14551 / JCM 1027 / KCTC 2358 / NCIMB 9240 / NCTC 8049), this protein is Integration host factor subunit beta.